The chain runs to 701 residues: CRS2-associated factor 1, chloroplastic (701 aa).

The N-terminal 37 residues, M1–N37, are a transit peptide targeting the chloroplast. 2 disordered regions span residues V68–K136 and L191–G221. 2 CRM domains span residues E241–R337 and E359–P455. The interval L471–V532 is disordered. 2 stretches are compositionally biased toward polar residues: residues V479 to P492 and T520 to K530. Positions R564–L586 are CRS2 binding.

In terms of assembly, interacts with CRS2 and RNA. Part of large ribonucleo-protein complexes that include group IIB introns, CRS2 and CAF1.

The protein resides in the plastid. The protein localises to the chloroplast stroma. Required for the splicing of group IIB introns in chloroplasts. Forms splicing particles with CRS2. Interacts with RNA and confers intron specificity of the splicing particles. In Arabidopsis thaliana (Mouse-ear cress), this protein is CRS2-associated factor 1, chloroplastic.